The primary structure comprises 95 residues: UPF0235 protein A2cp1_1215 (95 aa).

This sequence belongs to the UPF0235 family.

This chain is UPF0235 protein A2cp1_1215, found in Anaeromyxobacter dehalogenans (strain 2CP-1 / ATCC BAA-258).